Reading from the N-terminus, the 225-residue chain is UPF0758 protein XC_3944 (225 aa).

An MPN domain is found at 102-224 (ALSDPSSVGR…PVSLAERGWV (123 aa)). Zn(2+)-binding residues include His173, His175, and Asp186. The JAMM motif signature appears at 173-186 (HNHPSGNPEPSEAD).

It belongs to the UPF0758 family.

This is UPF0758 protein XC_3944 from Xanthomonas campestris pv. campestris (strain 8004).